The chain runs to 451 residues: Chromosomal replication initiator protein DnaA (451 aa).

Residues 1 to 72 (MSLPTSLWDK…TELLDELSDT (72 aa)) form a domain I, interacts with DnaA modulators region. Residues 72 to 114 (TPPQIRLQIGSRSTEMPTKNSHEPSHRKAAAPPAGTTISHTQA) are domain II. Over residues 81-90 (GSRSTEMPTK) the composition is skewed to polar residues. The disordered stretch occupies residues 81-106 (GSRSTEMPTKNSHEPSHRKAAAPPAG). The interval 115 to 331 (NINSNFTFDS…GALKRVIANA (217 aa)) is domain III, AAA+ region. Glycine 159, glycine 161, lysine 162, and threonine 163 together coordinate ATP. The interval 332–451 (HFTGQSITVD…YKNLMRILSG (120 aa)) is domain IV, binds dsDNA.

This sequence belongs to the DnaA family. As to quaternary structure, oligomerizes as a right-handed, spiral filament on DNA at oriC.

It is found in the cytoplasm. Functionally, plays an essential role in the initiation and regulation of chromosomal replication. ATP-DnaA binds to the origin of replication (oriC) to initiate formation of the DNA replication initiation complex once per cell cycle. Binds the DnaA box (a 9 base pair repeat at the origin) and separates the double-stranded (ds)DNA. Forms a right-handed helical filament on oriC DNA; dsDNA binds to the exterior of the filament while single-stranded (ss)DNA is stabiized in the filament's interior. The ATP-DnaA-oriC complex binds and stabilizes one strand of the AT-rich DNA unwinding element (DUE), permitting loading of DNA polymerase. After initiation quickly degrades to an ADP-DnaA complex that is not apt for DNA replication. Binds acidic phospholipids. The polypeptide is Chromosomal replication initiator protein DnaA (Coxiella burnetii (strain CbuK_Q154) (Coxiella burnetii (strain Q154))).